The sequence spans 206 residues: ATP-dependent dethiobiotin synthetase BioD (206 aa).

12-17 (GVGKTI) provides a ligand contact to ATP. Threonine 16 contacts Mg(2+). The active site involves lysine 32. Mg(2+) contacts are provided by histidine 46 and glutamate 98. Position 98 to 101 (98 to 101 (EGAG)) interacts with ATP.

The protein belongs to the dethiobiotin synthetase family. As to quaternary structure, homodimer. It depends on Mg(2+) as a cofactor.

The protein localises to the cytoplasm. The enzyme catalyses (7R,8S)-7,8-diammoniononanoate + CO2 + ATP = (4R,5S)-dethiobiotin + ADP + phosphate + 3 H(+). It participates in cofactor biosynthesis; biotin biosynthesis; biotin from 7,8-diaminononanoate: step 1/2. In terms of biological role, catalyzes a mechanistically unusual reaction, the ATP-dependent insertion of CO2 between the N7 and N8 nitrogen atoms of 7,8-diaminopelargonic acid (DAPA, also called 7,8-diammoniononanoate) to form a ureido ring. This Novosphingobium aromaticivorans (strain ATCC 700278 / DSM 12444 / CCUG 56034 / CIP 105152 / NBRC 16084 / F199) protein is ATP-dependent dethiobiotin synthetase BioD.